Consider the following 194-residue polypeptide: Calcium channel flower (194 aa).

Transmembrane regions (helical) follow at residues 35 to 55, 66 to 88, and 113 to 133; these read LGIV…FSII, IIQM…VCFE, and AIPP…GLIF.

The protein belongs to the calcium channel flower family. Homomultimer. Associates with the dally/ magu complex.

The protein localises to the cytoplasmic vesicle. Its subcellular location is the secretory vesicle. It is found in the synaptic vesicle membrane. The protein resides in the presynaptic cell membrane. It localises to the endosome. Channel activity is inhibited by La(3+), which reduces Ca(2+) influx and thus inhibits it's function in promoting activity-dependent bulk endocytosis (ADBE) in response to high stimuli. In terms of biological role, transmembrane protein which mediates synaptic endocytosis, fitness-based cell culling, neuronal culling, morphogen gradient scaling, and calcium transport. Regulates synaptic endocytosis and hence couples exo- with endocytosis. Controls two major modes of synaptic vesicle (SV) endocytosis in the synaptic boutons of neuromuscular junctions (NMJs); Ca(2+) channel-independent Clathrin-mediated endocytosis (CME) in response to mild stimulation, and Ca(2+) channel-dependent activity-dependent bulk endocytosis (ADBE) in response to strong stimulation. Functions in ADBE and subsequent SV reformation from bulk endosomes by initiating Ca(2+) channel-dependent phosphatidylinositol 4,5-bisphosphate (PtdIns(4,5)P2) compartmentalization in synaptic boutons. There it acts at the periactive zone to provide the low Ca(2+) levels required to initiate Calcineurin activation and upregulate PtdIns(4,5)P2. Conversely PtdIns(4,5)P2 enhances fwe Ca(2+) channel-activity, establishing a positive feedback loop that induces PtdIns(4,5)P2 microdomain at the periactive zone. These microdomains trigger bulk membrane invagination (i.e. ADBE) by triggering actin polymerization while also promoting localization of fwe to bulk endosomes, thereby removing the ADBE trigger to reduce endocytosis and prevent excess membrane uptake. PtdIns(4,5)P2 then promotes SV reformation from the bulk endosomes, to coordinate ADBE and subsequent SV reformation. Different combinations of the flower isoforms at the cell membrane are also required for the identification and elimination of suboptimal or supernumerary cells during development, regeneration, and adulthood. Required for the recognition and elimination of unfit cells in the developing wing during cell competition. In the developing pupal retina, mediates the elimination of unwanted postmitotic neurons, including supernumerary photoreceptor neurons that form at the periphery of the retina and are contained within incomplete ommatidia units. Also required for efficient elimination and replacement of old neurons by newly generated neurons during regeneration in the adult brain following mechanical injury. Downstream of the flower fitness fingerprints, cells identified as unwanted or unfit are eliminated via apoptosis through the expression of ahuizotl (azot). However, the cells marked for elimination by the flower isoforms only undergo apoptosis if additional thresholds are met; (1) their neighboring fit/healthy cells express different levels of the fwe isoforms, and (2) the levels of the protective signal SPARC expressed by the loser or unwanted cells are unable to inhibit caspase activation. These additional thresholds for flower-mediated apoptosis, allows useful cells to recover from transient and limited stress before they are unnecessarily eliminated. Functions with dally and magu in a mechanism of scaling, which utilises apoptosis to ensure that the dpp morphogen gradient, which mediates organ growth, remains proportional to the size of the growing wing. In this mechanism, fwe represses dally- and Magu-dependent activity in expanding the gradient, and dally/Magu inhibits fwe-dependent apoptosis to keep cell death rate low. When the levels of these different proteins are optimally regulated the gradient correctly scales with organ growth but when this fails, fwe-mediated apoptosis is activated to trim the developing tissue to match the correct size of the gradient. This is Calcium channel flower from Drosophila yakuba (Fruit fly).